The chain runs to 235 residues: Small ribosomal subunit protein uS3 (235 aa).

A KH type-2 domain is found at Ile39–Arg107. The tract at residues Gln215–Ala235 is disordered.

This sequence belongs to the universal ribosomal protein uS3 family. As to quaternary structure, part of the 30S ribosomal subunit. Forms a tight complex with proteins S10 and S14.

Functionally, binds the lower part of the 30S subunit head. Binds mRNA in the 70S ribosome, positioning it for translation. The sequence is that of Small ribosomal subunit protein uS3 from Rhodopseudomonas palustris (strain TIE-1).